A 149-amino-acid chain; its full sequence is Ribonuclease pancreatic (149 aa).

The N-terminal stretch at 1–25 (MGLEKSLILLPLLVLVLAWVQPSLG) is a signal peptide. Lys-32 and Arg-35 together coordinate substrate. The active-site Proton acceptor is the His-37. 4 disulfides stabilise this stretch: Cys-51–Cys-109, Cys-65–Cys-120, Cys-83–Cys-135, and Cys-90–Cys-97. Substrate is bound at residue 66 to 70 (KRVNT). The N-linked (GlcNAc...) asparagine glycan is linked to Asn-87. The substrate site is built by Lys-91 and Arg-110. Residue His-144 is the Proton donor of the active site.

Belongs to the pancreatic ribonuclease family. As to quaternary structure, monomer. Interacts with and forms tight 1:1 complexes with RNH1. Dimerization of two such complexes may occur. Interaction with RNH1 inhibits this protein. Pancreas.

The protein localises to the secreted. It carries out the reaction an [RNA] containing cytidine + H2O = an [RNA]-3'-cytidine-3'-phosphate + a 5'-hydroxy-ribonucleotide-3'-[RNA].. The enzyme catalyses an [RNA] containing uridine + H2O = an [RNA]-3'-uridine-3'-phosphate + a 5'-hydroxy-ribonucleotide-3'-[RNA].. Its function is as follows. Endonuclease that catalyzes the cleavage of RNA on the 3' side of pyrimidine nucleotides. Acts on single-stranded and double-stranded RNA. The sequence is that of Ribonuclease pancreatic (RNASE1) from Acomys cahirinus (Cairo spiny mouse).